A 906-amino-acid polypeptide reads, in one-letter code: Protein translocase subunit SecA (906 aa).

ATP-binding positions include Q86, 104-108, and D511; that span reads GEGKT. The segment covering 852-888 has biased composition (basic and acidic residues); sequence EHESVIDNNQRHDEDEQEEAPKVKQVRREGPKVKRND. Residues 852–906 are disordered; the sequence is EHESVIDNNQRHDEDEQEEAPKVKQVRREGPKVKRNDPCPCGSGKKYKQCHSKVE. Positions 890, 892, 901, and 902 each coordinate Zn(2+). A compositionally biased stretch (basic residues) spans 896–906; sequence KKYKQCHSKVE.

It belongs to the SecA family. As to quaternary structure, monomer and homodimer. Part of the essential Sec protein translocation apparatus which comprises SecA, SecYEG and auxiliary proteins SecDF-YajC and YidC. Zn(2+) is required as a cofactor.

It localises to the cell inner membrane. Its subcellular location is the cytoplasm. The catalysed reaction is ATP + H2O + cellular proteinSide 1 = ADP + phosphate + cellular proteinSide 2.. Part of the Sec protein translocase complex. Interacts with the SecYEG preprotein conducting channel. Has a central role in coupling the hydrolysis of ATP to the transfer of proteins into and across the cell membrane, serving both as a receptor for the preprotein-SecB complex and as an ATP-driven molecular motor driving the stepwise translocation of polypeptide chains across the membrane. This is Protein translocase subunit SecA from Francisella tularensis subsp. tularensis (strain SCHU S4 / Schu 4).